We begin with the raw amino-acid sequence, 209 residues long: Large ribosomal subunit protein uL1 (209 aa).

The protein belongs to the universal ribosomal protein uL1 family. In terms of assembly, part of the 50S ribosomal subunit.

Functionally, binds directly to 23S rRNA. The L1 stalk is quite mobile in the ribosome, and is involved in E site tRNA release. Protein L1 is also a translational repressor protein, it controls the translation of the L11 operon by binding to its mRNA. In Neorickettsia sennetsu (strain ATCC VR-367 / Miyayama) (Ehrlichia sennetsu), this protein is Large ribosomal subunit protein uL1 (rplA).